The primary structure comprises 141 residues: MAKKVVTVIKLALPAGKANPAPPVGPALGQHGVNIMAFCKEYNAKTSDQAGMIIPVEISVYEDRSFTFILKTPPASVLIRKAAGVEKGSAQPNKQKAGSISRAQLQEIAQTKMPDLNANDIEAAMNIVAGTARNMGITVTD.

This sequence belongs to the universal ribosomal protein uL11 family. As to quaternary structure, part of the ribosomal stalk of the 50S ribosomal subunit. Interacts with L10 and the large rRNA to form the base of the stalk. L10 forms an elongated spine to which L12 dimers bind in a sequential fashion forming a multimeric L10(L12)X complex. One or more lysine residues are methylated.

Its function is as follows. Forms part of the ribosomal stalk which helps the ribosome interact with GTP-bound translation factors. In Picosynechococcus sp. (strain ATCC 27264 / PCC 7002 / PR-6) (Agmenellum quadruplicatum), this protein is Large ribosomal subunit protein uL11.